Consider the following 406-residue polypeptide: Argininosuccinate synthase (406 aa).

ATP-binding positions include 12–20 (AYSGGLDTS) and Ala40. The L-citrulline site is built by Tyr92 and Ser97. Residue Gly122 participates in ATP binding. Residues Thr124, Asn128, and Asp129 each contribute to the L-aspartate site. Asn128 contributes to the L-citrulline binding site. L-citrulline-binding residues include Arg132, Ser181, Ser190, Glu266, and Tyr278.

This sequence belongs to the argininosuccinate synthase family. Type 1 subfamily. In terms of assembly, homotetramer.

It is found in the cytoplasm. It catalyses the reaction L-citrulline + L-aspartate + ATP = 2-(N(omega)-L-arginino)succinate + AMP + diphosphate + H(+). It participates in amino-acid biosynthesis; L-arginine biosynthesis; L-arginine from L-ornithine and carbamoyl phosphate: step 2/3. The sequence is that of Argininosuccinate synthase from Serratia proteamaculans (strain 568).